Here is a 619-residue protein sequence, read N- to C-terminus: MPIRQLPEILINQIAAGEVVERPASVVKELVENAIDAGATRVDIELEAAGVRLIRIRDNGHGMAAQELPLAVLRHATSKIASLDDLEAVATLGFRGEALPSIASVSRFTLMSRRATDEHGAVLQIEGGTLGEVIPHAHAPGTTVEVRELFYNVPARRKFLRAERTELGHIEEWARSLALAHPDLELRLSHNGKLSRRYKPGDWYSDVRLIEILGEDFAHQALRVDHSGAGLRLHGCIVQPHYSRLNADQQYLYVNGRPVRDRSVAHAVKQAYSDVLYQGRHPAYVLFLELDPARVDVNVHPAKHEVRFRDARLIHDFVYRTVQGTLAQTRAGTPPLAVGVGDVEGEGARPPGRHAVSFSGRRGGASHVLGSYSASTAPLMQGVPSVSVADAPAAYAALYAAPPTQVMDAVPQMQTGLPLAAGAGDVPLLGYAIAQLHGIYILAECADGLIVVDMHAAHERIGYERLKRAHDGIGLRTQPLLVPMTLMVAEREADVAECEAETLANLGFEVTRSGPGSLQVRSIPALLSQAEPEMLLRDVLSDLSEHGHTRRVAEARDTLLATMACHGAVRAHRRLSISEMNALLRDMEATERSGQCNHGRPTWARFSLAEIDRWFLRGR.

The protein belongs to the DNA mismatch repair MutL/HexB family.

In terms of biological role, this protein is involved in the repair of mismatches in DNA. It is required for dam-dependent methyl-directed DNA mismatch repair. May act as a 'molecular matchmaker', a protein that promotes the formation of a stable complex between two or more DNA-binding proteins in an ATP-dependent manner without itself being part of a final effector complex. The protein is DNA mismatch repair protein MutL of Xylella fastidiosa (strain M23).